Reading from the N-terminus, the 386-residue chain is Cytochrome b (386 aa).

Helical transmembrane passes span 32–52 (FGSL…TLAM), 76–98 (WLIR…LHVG), 113–133 (TWII…LGYV), and 179–199 (FFAL…MHLI). The heme b site is built by H82 and H96. Heme b contacts are provided by H183 and H197. H202 is a binding site for a ubiquinone. 4 helical membrane passes run 226–246 (YIFK…LFVF), 290–310 (LLGV…PITD), 322–342 (LSKV…QLGA), and 349–369 (FIEF…VIMP).

The protein belongs to the cytochrome b family. Fungal cytochrome b-c1 complex contains 10 subunits; 3 respiratory subunits, 2 core proteins and 5 low-molecular weight proteins. Cytochrome b-c1 complex is a homodimer. Requires heme b as cofactor.

It localises to the mitochondrion inner membrane. Functionally, component of the ubiquinol-cytochrome c reductase complex (complex III or cytochrome b-c1 complex) that is part of the mitochondrial respiratory chain. The b-c1 complex mediates electron transfer from ubiquinol to cytochrome c. Contributes to the generation of a proton gradient across the mitochondrial membrane that is then used for ATP synthesis. The protein is Cytochrome b (cob) of Talaromyces marneffei (Penicillium marneffei).